The following is a 135-amino-acid chain: Fluoride-specific ion channel FluC (135 aa).

A run of 4 helical transmembrane segments spans residues 7-27 (IAAISLGASLGALARYGLGLA), 37-57 (IGTLAANLIAAYVVGVTIAYV), 70-90 (FMITGLAGGLSTFSTFTAELF), and 105-125 (LGLHVGGSLALLMLGMLTIGL). Na(+) is bound by residues glycine 77 and serine 80.

This sequence belongs to the fluoride channel Fluc/FEX (TC 1.A.43) family.

The protein localises to the cell inner membrane. It catalyses the reaction fluoride(in) = fluoride(out). Its activity is regulated as follows. Na(+) is not transported, but it plays an essential structural role and its presence is essential for fluoride channel function. In terms of biological role, fluoride-specific ion channel. Important for reducing fluoride concentration in the cell, thus reducing its toxicity. In Xanthomonas oryzae pv. oryzae (strain MAFF 311018), this protein is Fluoride-specific ion channel FluC.